A 393-amino-acid chain; its full sequence is Alpha-pyrone synthesis polyketide synthase-like Pks18 (393 aa).

Positions Met-1–Pro-26 are disordered. The active-site Nucleophile is the Cys-175. His-221 is a substrate binding site.

The protein belongs to the thiolase-like superfamily. Chalcone/stilbene synthases family. Homodimer.

It functions in the pathway lipid metabolism; fatty acid biosynthesis. Involved in the biosynthesis of tri- and tetraketide alpha-pyrones. Pks18 catalyzes the extension of medium- and long-chain aliphatic acyl-CoA substrates by using malonyl-CoA as an extender molecule to synthesize polyketide products. This chain is Alpha-pyrone synthesis polyketide synthase-like Pks18 (pks18), found in Mycobacterium bovis (strain ATCC BAA-935 / AF2122/97).